The chain runs to 174 residues: Chromophore lyase CpcS/CpeS 1 (174 aa).

Belongs to the CpcS/CpeS biliprotein lyase family.

In terms of biological role, covalently attaches a chromophore to Cys residue(s) of phycobiliproteins. This Trichodesmium erythraeum (strain IMS101) protein is Chromophore lyase CpcS/CpeS 1.